Reading from the N-terminus, the 348-residue chain is Protein arginine N-methyltransferase 1 (348 aa).

One can recognise an SAM-dependent MTase PRMT-type domain in the interval 24 to 342 (KDYYFDSYAH…KGEVCDLNEQ (319 aa)). Positions 37, 46, 70, 92, and 121 each coordinate S-adenosyl-L-methionine. Residues E139 and E148 contribute to the active site.

This sequence belongs to the class I-like SAM-binding methyltransferase superfamily. Protein arginine N-methyltransferase family. Interacts with daf-16. Interacts with pgl-1 and pgl-3. Interacts with alg-1. In terms of tissue distribution, widely expressed in pharyngeal, body wall muscle, intestinal and vulval cells.

It is found in the cytoplasm. It localises to the nucleus. It catalyses the reaction L-arginyl-[protein] + 2 S-adenosyl-L-methionine = N(omega),N(omega)-dimethyl-L-arginyl-[protein] + 2 S-adenosyl-L-homocysteine + 2 H(+). It carries out the reaction L-arginyl-[protein] + S-adenosyl-L-methionine = N(omega)-methyl-L-arginyl-[protein] + S-adenosyl-L-homocysteine + H(+). Arginine methyltransferase that methylates (mono and asymmetric dimethylation) the guanidino nitrogens of arginyl residues present in target proteins. Catalyzes the formation of monomethylarginine and asymmetric dimethylarginine on histones H2A and H4, a specific tag for epigenetic transcriptional activation. Catalyzes asymmetric arginine dimethylation of mitochondrial proteins necessary for mitochondrial oxidative phosphorylation activity and thus aerobic respiration and ATP synthesis, and the mitochondrial stress response. Methylates arginine residues in P-granule components pgl-1 and pgl-3 to promote P-granule degradation by autophagy in somatic cells to ensure exclusive localization of the P-granules in germ cells. Modulates the interaction of P-granule proteins epg-2 and sepa-1. Methylates arginine residues in daf-16, which blocks ftt-2 binding to daf-16, prevents akt-mediated phosphorylation and allows for daf-16 to translocate to the nucleus. In turn, association with daf-16 therefore allows for the transcriptional activation of daf-16 and regulation of longevity-related genes. Maintains lifespan by modulating daf-16 activity downstream of the daf-2 signaling pathway. Plays a role in heat and oxidative stress resistance. Role in stress resistance and also fat storage may be in association with the daf-2 signaling pathway. Required for normal feeding behavior. The chain is Protein arginine N-methyltransferase 1 from Caenorhabditis elegans.